Here is a 539-residue protein sequence, read N- to C-terminus: O-phosphoserine--tRNA(Cys) ligase (539 aa).

Residues 188-190 (HMT), 233-235 (SAS), 275-276 (YY), and Asn-327 each bind substrate.

The protein belongs to the class-II aminoacyl-tRNA synthetase family. O-phosphoseryl-tRNA(Cys) synthetase subfamily. In terms of assembly, homotetramer. Interacts with SepCysS.

It carries out the reaction tRNA(Cys) + O-phospho-L-serine + ATP = O-phospho-L-seryl-tRNA(Cys) + AMP + diphosphate. Functionally, catalyzes the attachment of O-phosphoserine (Sep) to tRNA(Cys). The sequence is that of O-phosphoserine--tRNA(Cys) ligase from Methanococcoides burtonii (strain DSM 6242 / NBRC 107633 / OCM 468 / ACE-M).